Here is a 185-residue protein sequence, read N- to C-terminus: ATP-dependent protease subunit HslV (185 aa).

T6 is an active-site residue. Na(+) contacts are provided by G162, C165, and T168.

Belongs to the peptidase T1B family. HslV subfamily. As to quaternary structure, a double ring-shaped homohexamer of HslV is capped on each side by a ring-shaped HslU homohexamer. The assembly of the HslU/HslV complex is dependent on binding of ATP.

Its subcellular location is the cytoplasm. The catalysed reaction is ATP-dependent cleavage of peptide bonds with broad specificity.. Allosterically activated by HslU binding. Protease subunit of a proteasome-like degradation complex believed to be a general protein degrading machinery. In Nitratidesulfovibrio vulgaris (strain DSM 19637 / Miyazaki F) (Desulfovibrio vulgaris), this protein is ATP-dependent protease subunit HslV.